A 223-amino-acid chain; its full sequence is 2-C-methyl-D-erythritol 4-phosphate cytidylyltransferase (223 aa).

It belongs to the IspD/TarI cytidylyltransferase family. IspD subfamily.

The enzyme catalyses 2-C-methyl-D-erythritol 4-phosphate + CTP + H(+) = 4-CDP-2-C-methyl-D-erythritol + diphosphate. The protein operates within isoprenoid biosynthesis; isopentenyl diphosphate biosynthesis via DXP pathway; isopentenyl diphosphate from 1-deoxy-D-xylulose 5-phosphate: step 2/6. Its function is as follows. Catalyzes the formation of 4-diphosphocytidyl-2-C-methyl-D-erythritol from CTP and 2-C-methyl-D-erythritol 4-phosphate (MEP). The sequence is that of 2-C-methyl-D-erythritol 4-phosphate cytidylyltransferase from Synechococcus sp. (strain WH7803).